A 450-amino-acid chain; its full sequence is MFIGFDYGTANCSVAVMRDGKPHLLKMENDSTLLPSMLCAPTREAVSEWLYRHHDVPADDDETQALLRRAIRYNREEDIDVTAKSVQFGLSSLAQYIDDPEEVWFVKSPKSFLGASGLKPQQVALFEDLVCAMMLHIRQQAQAQLPEAITQAVIGRPINFQGLGGDEANTQAQGILERAAKRAGFRDVVFQYEPVAAGLDYEATLQEEKRVLVVDIGGGTTDCSLLLMGPQWRSRLDREASLLGHSGCRIGGNDLDIALAFKNLMPLLGMGGETEKGIALPILPWWNAVAINDVPAQSDFYSSANGRLLNDLVRDAREPEKVALLQKVWRQRLSYRLVRSAEECKIALSSVAETRASLPFISNELATLISQRGLESALSQPLTRILEQVQLALDNAQEKPDVIYLTGGSARSPLIKKALAEQLPGIPIAGGDDFGSVTAGLARWAEVVFR.

This sequence belongs to the heat shock protein 70 family.

This is an uncharacterized protein from Escherichia coli (strain K12).